The primary structure comprises 766 residues: MKEKSKNAARTRREKENSEFYELAKLLPLPSAITSQLDKASIIRLTTSYLKMRVVFPEGLGEAWGHSSRTSPLDNVGRELGSHLLQTLDGFIFVVAPDGKIMYISETASVHLGLSQVELTGNSIYEYIHPADHDEMTAVLTAHQPYHSHFVQEYEIERSFFLRMKCVLAKRNAGLTCGGYKVIHCSGYLKIRQYSLDMSPFDGCYQNVGLVAVGHSLPPSAVTEIKLHSNMFMFRASLDMKLIFLDSRVAELTGYEPQDLIEKTLYHHVHGCDTFHLRCAHHLLLVKGQVTTKYYRFLAKHGGWVWVQSYATIVHNSRSSRPHCIVSVNYVLTDTEYKGLQLSLDQISASKPAFSYTSSSTPTMTDNRKGAKSRLSSSKSKSRTSPYPQYSGFHTERSESDHDSQWGGSPLTDTASPQLLDPADRPGSQHDASCAYRQFSDRSSLCYGFALDHSRLVEERHFHTQACEGGRCEAGRYFLGTPQAGREPWWGSRAALPLTKASPESREAYENSMPHIASVHRIHGRGHWDEDSVVSSPDPGSASESGDRYRTEQYQSSPHEPSKIETLIRATQQMIKEEENRLQLRKAPSDQLASINGAGKKHSLCFANYQQPPPTGEVCHGSALANTSPCDHIQQREGKMLSPHENDYDNSPTALSRISSPNSDRISKSSLILAKDYLHSDISPHQTAGDHPTVSPNCFGSHRQYFDKHAYTLTGYALEHLYDSETIRNYSLGCNGSHFDVTSHLRMQPDPAQGHKGTSVIITNGS.

The 53-residue stretch at 1-53 (MKEKSKNAARTRREKENSEFYELAKLLPLPSAITSQLDKASIIRLTTSYLKMR) folds into the bHLH domain. 2 consecutive PAS domains span residues 77–147 (GREL…QPYH) and 218–288 (PPSA…LVKG). The PAC domain maps to 292-335 (TKYYRFLAKHGGWVWVQSYATIVHNSRSSRPHCIVSVNYVLTDT). In terms of domain architecture, Single-minded C-terminal spans 336–766 (EYKGLQLSLD…GTSVIITNGS (431 aa)). Polar residues predominate over residues 353–365 (AFSYTSSSTPTMT). Disordered regions lie at residues 353–431 (AFSY…SQHD) and 528–563 (WDED…EPSK). The Nuclear localization signal signature appears at 368 to 387 (RKGAKSRLSSSKSKSRTSPY). A compositionally biased stretch (low complexity) spans 373 to 385 (SRLSSSKSKSRTS). The segment covering 394–404 (HTERSESDHDS) has biased composition (basic and acidic residues).

Efficient DNA binding requires dimerization with another bHLH protein. Heterodimer; forms a heterodimer with ARNT, ARNT2.

The protein localises to the nucleus. Functionally, transcriptional factor that may have pleiotropic effects during embryogenesis and in the adult. This Homo sapiens (Human) protein is Single-minded homolog 1 (SIM1).